The sequence spans 284 residues: Parvulin-like PPIase (284 aa).

An N-terminal signal peptide occupies residues 1-20; that stretch reads MKKLSIVLLSVSMLSSIAFA. The region spanning 139-232 is the PpiC domain; that stretch reads KEQIKVAHIL…YGWHIIKVLE (94 aa).

Belongs to the PpiC/parvulin rotamase family.

The protein localises to the cell outer membrane. The enzyme catalyses [protein]-peptidylproline (omega=180) = [protein]-peptidylproline (omega=0). This Rickettsia bellii (strain RML369-C) protein is Parvulin-like PPIase (plp).